The sequence spans 379 residues: Cytochrome-c peroxidase IdrP1 (379 aa).

The first 24 residues, 1 to 24 (MNNRKPLQLSLLVASLAVAFTASA), serve as a signal peptide directing secretion. 2 Cytochrome c domains span residues 50 to 158 (EKIA…DAFK) and 204 to 355 (TSQK…EALS). Residues Cys-72, Cys-75, His-76, Cys-219, Cys-222, and His-223 each coordinate heme c.

The iodate reductase (Idr) complex is composed of a molybdopterin-dependent iodate reductase (IdrA and IdrB subunits) and two associated peroxidases (IdrP1 and IdrP2). Heme c is required as a cofactor.

The protein resides in the periplasm. It carries out the reaction 2 Fe(II)-[cytochrome c] + H2O2 + 2 H(+) = 2 Fe(III)-[cytochrome c] + 2 H2O. In terms of biological role, involved in iodate respiration. Probably reduces the H(2)O(2) produced by IdrA/IdrB to H(2)O, using a reduced cytochrome c as the electron donor. This is Cytochrome-c peroxidase IdrP1 from Pseudomonas sp. (strain SCT).